Consider the following 31-residue polypeptide: Cyclotide cter-E (31 aa).

A cross-link (cyclopeptide (Gly-Asp)) is located at residues Gly-1–Asp-31. 3 disulfides stabilise this stretch: Cys-4–Cys-21, Cys-8–Cys-23, and Cys-13–Cys-28.

Post-translationally, contains 3 disulfide bonds. This is a cyclic peptide.

Probably participates in a plant defense mechanism. The protein is Cyclotide cter-E of Clitoria ternatea (Butterfly pea).